A 216-amino-acid polypeptide reads, in one-letter code: Flavin-dependent thymidylate synthase (216 aa).

A ThyX domain is found at 9-206 (GFVELVDVMG…PWTYEAFIKY (198 aa)). Residues Ser-55, 78 to 80 (RHR), and Glu-86 each bind FAD. Residues 75–78 (QWFR), 86–90 (ELSGR), and Arg-145 each bind dUMP. The short motif at 78–88 (RHRIASYNELS) is the ThyX motif element. Residues 161–163 (NAR) and Asn-167 each bind FAD. Residue Arg-172 coordinates dUMP. The active-site Involved in ionization of N3 of dUMP, leading to its activation is Arg-172.

This sequence belongs to the thymidylate synthase ThyX family. As to quaternary structure, homotetramer. It depends on FAD as a cofactor.

It catalyses the reaction dUMP + (6R)-5,10-methylene-5,6,7,8-tetrahydrofolate + NADPH + H(+) = dTMP + (6S)-5,6,7,8-tetrahydrofolate + NADP(+). It functions in the pathway pyrimidine metabolism; dTTP biosynthesis. Functionally, catalyzes the reductive methylation of 2'-deoxyuridine-5'-monophosphate (dUMP) to 2'-deoxythymidine-5'-monophosphate (dTMP) while utilizing 5,10-methylenetetrahydrofolate (mTHF) as the methyl donor, and NADPH and FADH(2) as the reductant. The polypeptide is Flavin-dependent thymidylate synthase (Thermotoga neapolitana (strain ATCC 49049 / DSM 4359 / NBRC 107923 / NS-E)).